The following is a 583-amino-acid chain: Phosphoglucomutase, cytoplasmic 1 (583 aa).

The alpha-D-glucose 1,6-bisphosphate site is built by Arg25 and Ser124. Residue Ser124 is the Phosphoserine intermediate of the active site. Positions 124, 300, 302, and 304 each coordinate Mg(2+). Ser124 is modified (phosphoserine). Residues Asp304, Arg305, Thr368, Glu387, Ser389, and Lys400 each contribute to the alpha-D-glucose 1,6-bisphosphate site.

The protein belongs to the phosphohexose mutase family. As to quaternary structure, monomer. Mg(2+) is required as a cofactor. Post-translationally, autophosphorylated. As to expression, mostly expressed in roots and coleoptiles, and, to a lower extent, in leaves, pollen and developing seeds.

Its subcellular location is the cytoplasm. It catalyses the reaction alpha-D-glucose 1-phosphate = alpha-D-glucose 6-phosphate. It carries out the reaction O-phospho-L-seryl-[protein] + alpha-D-glucose 1-phosphate = alpha-D-glucose 1,6-bisphosphate + L-seryl-[protein]. The catalysed reaction is alpha-D-glucose 1,6-bisphosphate + L-seryl-[protein] = O-phospho-L-seryl-[protein] + alpha-D-glucose 6-phosphate. Catalyzes the reversible isomerization of alpha-D-glucose 1-phosphate to alpha-D-glucose 6-phosphate. The mechanism proceeds via the intermediate compound alpha-D-glucose 1,6-bisphosphate. This enzyme participates in both the breakdown and synthesis of glucose. The polypeptide is Phosphoglucomutase, cytoplasmic 1 (Zea mays (Maize)).